A 936-amino-acid polypeptide reads, in one-letter code: Protein translocase subunit SecA (936 aa).

ATP-binding positions include Q87, 105 to 109 (GEGKT), and D515. The Zn(2+) site is built by C920, C922, C931, and H932.

This sequence belongs to the SecA family. As to quaternary structure, monomer and homodimer. Part of the essential Sec protein translocation apparatus which comprises SecA, SecYEG and auxiliary proteins SecDF-YajC and YidC. Zn(2+) is required as a cofactor.

The protein localises to the cell inner membrane. The protein resides in the cytoplasm. The catalysed reaction is ATP + H2O + cellular proteinSide 1 = ADP + phosphate + cellular proteinSide 2.. Its function is as follows. Part of the Sec protein translocase complex. Interacts with the SecYEG preprotein conducting channel. Has a central role in coupling the hydrolysis of ATP to the transfer of proteins into and across the cell membrane, serving both as a receptor for the preprotein-SecB complex and as an ATP-driven molecular motor driving the stepwise translocation of polypeptide chains across the membrane. The chain is Protein translocase subunit SecA from Paraburkholderia phymatum (strain DSM 17167 / CIP 108236 / LMG 21445 / STM815) (Burkholderia phymatum).